Here is a 72-residue protein sequence, read N- to C-terminus: UPF0729 protein C18orf32 homolog (72 aa).

Residues 1 to 33 (MVCIPCIVIPVLLWIFKKFLEPYIYPVVSRIWP) are necessary for its localzation to the endoplasmic reticulum and lipid droplets. Residues 36–72 (AVQQSGDKNMSKVDCKGAGTNGLPTKGPTEVSDKKKD) form a disordered region.

It belongs to the UPF0729 family. Interacts with DERL1 and AMFR. Undergoes ER-associated degradation (ERAD).

It is found in the endoplasmic reticulum. Its subcellular location is the lipid droplet. Functionally, may activate the NF-kappa-B signaling pathway. In Mus musculus (Mouse), this protein is UPF0729 protein C18orf32 homolog.